Reading from the N-terminus, the 125-residue chain is MELFQTADWKKEKHVPVIEVLRAEGGVVEVKVSVGKEIPHPNTTEHHIAWIELVFQPEGSKFPYVVGRAEFAAHGASVDGPNTSGVYTDPVAVFAFKAEKSGKLTAFSYCNIHGLWMGEATLSLE.

6 residues coordinate Fe cation: Glu-12, His-14, His-40, His-46, Cys-110, and His-113.

This sequence belongs to the desulfoferrodoxin family. It depends on Fe cation as a cofactor.

It carries out the reaction reduced [rubredoxin] + superoxide + 2 H(+) = oxidized [rubredoxin] + H2O2. In terms of biological role, uses electrons from reduced NADP, by way of rubredoxin and an oxidoreductase, to catalyze the reduction of superoxide to hydrogen peroxide. The sequence is that of Putative superoxide reductase from Archaeoglobus fulgidus (strain ATCC 49558 / DSM 4304 / JCM 9628 / NBRC 100126 / VC-16).